We begin with the raw amino-acid sequence, 229 residues long: 5'-methylthioadenosine/S-adenosylhomocysteine nucleosidase (229 aa).

Glu12 functions as the Proton acceptor in the catalytic mechanism. Substrate is bound by residues Gly78, Ile152, and 173 to 174 (ME). Asp197 serves as the catalytic Proton donor.

Belongs to the PNP/UDP phosphorylase family. MtnN subfamily.

It carries out the reaction S-adenosyl-L-homocysteine + H2O = S-(5-deoxy-D-ribos-5-yl)-L-homocysteine + adenine. The catalysed reaction is S-methyl-5'-thioadenosine + H2O = 5-(methylsulfanyl)-D-ribose + adenine. The enzyme catalyses 5'-deoxyadenosine + H2O = 5-deoxy-D-ribose + adenine. It participates in amino-acid biosynthesis; L-methionine biosynthesis via salvage pathway; S-methyl-5-thio-alpha-D-ribose 1-phosphate from S-methyl-5'-thioadenosine (hydrolase route): step 1/2. Functionally, catalyzes the irreversible cleavage of the glycosidic bond in both 5'-methylthioadenosine (MTA) and S-adenosylhomocysteine (SAH/AdoHcy) to adenine and the corresponding thioribose, 5'-methylthioribose and S-ribosylhomocysteine, respectively. Also cleaves 5'-deoxyadenosine, a toxic by-product of radical S-adenosylmethionine (SAM) enzymes, into 5-deoxyribose and adenine. The chain is 5'-methylthioadenosine/S-adenosylhomocysteine nucleosidase from Haemophilus influenzae (strain PittGG).